We begin with the raw amino-acid sequence, 208 residues long: Small ribosomal subunit protein uS4 (208 aa).

Positions 98-161 constitute an S4 RNA-binding domain; that stretch reads RRLDNVVYRL…KASPRIKELV (64 aa).

It belongs to the universal ribosomal protein uS4 family. Part of the 30S ribosomal subunit. Contacts protein S5. The interaction surface between S4 and S5 is involved in control of translational fidelity.

One of the primary rRNA binding proteins, it binds directly to 16S rRNA where it nucleates assembly of the body of the 30S subunit. In terms of biological role, with S5 and S12 plays an important role in translational accuracy. This Desulforamulus reducens (strain ATCC BAA-1160 / DSM 100696 / MI-1) (Desulfotomaculum reducens) protein is Small ribosomal subunit protein uS4.